A 132-amino-acid chain; its full sequence is Small ribosomal subunit protein uS11 (132 aa).

This sequence belongs to the universal ribosomal protein uS11 family. Part of the 30S ribosomal subunit. Interacts with proteins S7 and S18. Binds to IF-3.

Located on the platform of the 30S subunit, it bridges several disparate RNA helices of the 16S rRNA. Forms part of the Shine-Dalgarno cleft in the 70S ribosome. The sequence is that of Small ribosomal subunit protein uS11 from Chlamydia felis (strain Fe/C-56) (Chlamydophila felis).